The following is a 159-amino-acid chain: MATKSKKKILKTVSVVDISCGNCIKPTFASIFNFFSKKPKRPSSTYRHCHSSISSATPSSTPLATASVAVEKDSDDPYLDFRQSMLQMILENQIYSKDELRELLQCFLSLNSHYHHGIIVRAFSEIWEDVSSAAASAVEASPLITRHVSRASRDYYNYY.

Residues 39–60 (PKRPSSTYRHCHSSISSATPSS) are disordered. Residues 51–60 (SSISSATPSS) show a composition bias toward low complexity. The OVATE domain maps to 70–129 (VEKDSDDPYLDFRQSMLQMILENQIYSKDELRELLQCFLSLNSHYHHGIIVRAFSEIWED).

Interacts with KNAT1 and KNAT7. In terms of tissue distribution, expressed in roots, shoots, rosette and cauline leaves, stems, flower buds and siliques.

The protein resides in the nucleus. Its function is as follows. Transcriptional repressor that regulates multiple aspects of plant growth and development through the regulation of BEL1-LIKE (BLH) and KNOX TALE (KNAT) homeodomain transcription factors. The protein is Transcription repressor OFP6 (OFP6) of Arabidopsis thaliana (Mouse-ear cress).